The following is a 366-amino-acid chain: Tyrosine--tRNA ligase (366 aa).

L-tyrosine contacts are provided by tyrosine 41, tyrosine 167, glutamine 171, aspartate 174, and glutamine 189. A 'KMSKS' region motif is present at residues 241-245 (KMSKS). Position 244 (lysine 244) interacts with ATP.

This sequence belongs to the class-I aminoacyl-tRNA synthetase family. TyrS type 4 subfamily. Homodimer.

Its subcellular location is the cytoplasm. It carries out the reaction tRNA(Tyr) + L-tyrosine + ATP = L-tyrosyl-tRNA(Tyr) + AMP + diphosphate + H(+). Catalyzes the attachment of tyrosine to tRNA(Tyr) in a two-step reaction: tyrosine is first activated by ATP to form Tyr-AMP and then transferred to the acceptor end of tRNA(Tyr). This Saccharolobus solfataricus (strain ATCC 35092 / DSM 1617 / JCM 11322 / P2) (Sulfolobus solfataricus) protein is Tyrosine--tRNA ligase.